The sequence spans 251 residues: Triosephosphate isomerase (251 aa).

9–11 (NWK) serves as a coordination point for substrate. The active-site Electrophile is His-95. Glu-167 acts as the Proton acceptor in catalysis. Substrate contacts are provided by residues Gly-173, Ser-212, and 233 to 234 (GG).

The protein belongs to the triosephosphate isomerase family. In terms of assembly, homodimer.

The protein resides in the cytoplasm. It carries out the reaction D-glyceraldehyde 3-phosphate = dihydroxyacetone phosphate. It functions in the pathway carbohydrate biosynthesis; gluconeogenesis. It participates in carbohydrate degradation; glycolysis; D-glyceraldehyde 3-phosphate from glycerone phosphate: step 1/1. In terms of biological role, involved in the gluconeogenesis. Catalyzes stereospecifically the conversion of dihydroxyacetone phosphate (DHAP) to D-glyceraldehyde-3-phosphate (G3P). In Pseudomonas syringae pv. tomato (strain ATCC BAA-871 / DC3000), this protein is Triosephosphate isomerase.